The chain runs to 453 residues: tRNA (guanine-N(7)-)-methyltransferase non-catalytic subunit TRM82 (453 aa).

Residues 69 to 99 form a disordered region; sequence ENEEKGIKKSKTNEGNTIEKKHDAKIPVPGP. 2 WD repeats span residues 103 to 143 and 244 to 286; these read PIYS…NDNC and GHKE…DEFD.

It belongs to the WD repeat TRM82 family. As to quaternary structure, forms a heterodimer with the catalytic subunit TRM8.

It is found in the nucleus. It participates in tRNA modification; N(7)-methylguanine-tRNA biosynthesis. Required for the formation of N(7)-methylguanine at position 46 (m7G46) in tRNA. In the complex, it is required to stabilize and induce conformational changes of the catalytic subunit. This chain is tRNA (guanine-N(7)-)-methyltransferase non-catalytic subunit TRM82, found in Vanderwaltozyma polyspora (strain ATCC 22028 / DSM 70294 / BCRC 21397 / CBS 2163 / NBRC 10782 / NRRL Y-8283 / UCD 57-17) (Kluyveromyces polysporus).